We begin with the raw amino-acid sequence, 340 residues long: Polyporopepsin (340 aa).

In terms of domain architecture, Peptidase A1 spans 14–330; the sequence is YVVNVGVGSP…DTTNKRLGLA (317 aa). Residue D32 is part of the active site. A glycan (N-linked (GlcNAc...) asparagine) is linked at N192. D212 is an active-site residue. N-linked (GlcNAc...) asparagine glycosylation is present at N238.

Belongs to the peptidase A1 family.

It catalyses the reaction Milk clotting activity, broad specificity, but fails to cleave 15-Leu-|-Tyr-16 or 16-Tyr-|-Leu-17 of insulin B chain.. This chain is Polyporopepsin, found in Irpex lacteus (Milk-white toothed polypore).